A 912-amino-acid chain; its full sequence is MAKSENSTTSTFSSFANKIQPSNDAESDPDSYALEKFKLYETRARFYLVGSDRNKRFFRVLKIDRSEPSELNISEDPVVYSPQEIKSLLQRIAEGNRATGGLAFVAKVYGIAGCAKFMESYYLVLVTKRRQIGCICGHAIYAIDESQMISVPHATIQSDVANSKTELRYKKLLSSVDLTKDFFYSYTYPIMQSLQKNVLSSGEEGMPYDNIFVWNSYLTQPIRSRCNNTIWTLALVHGHFKQIRLSIYGRDFSVTLVSRRSRHFAGTRYLKRGVNDRGRVANDVETEQLVLDDEAGSCKGKMSSVVQMRGSIPLFWSQEASRFSPKPDIFLQRYDPTYESTKMHFEDLVNRYGNPIIVLNLIKTVEKRPREMVLRREFANAVGYLNSIFREENHLKFIHWDFHKFAKSKSANVLAVLGAVASEALDLTGLYFSGKPKIVKKKASQLSHANTAREPSLRDLRAYSAELSRGESANDILSALANREKEMKLTQQKKDEGTNSSAPRYQSGVLRTNCIDCLDRTNVAQYAYGLAALGRQLHAMGLSDTPKIDPDSSIAAALMDMYQSMGDALAQQYGGSAAHNTVFPERQGKWKATTQSREFLKSIKRYYSNTYTDGEKQDAINLFLGYFQPQEGKPALWELDSDYYLHVSGIGDDIFPDIGVQSIAKPMSGIGVNLAPVPAFRDDFSRKKLTSFDKLIEQTCSSIKNVRLCSETDQRPGGNTGSTGVAPDAAEIQLKSPNWLFGSRKPEESSSATKSGADDSEKGVTSTERVNDFCNLDWLSKSDRHQGDIFQRYLSITSTNEANGWYGGTLLGDQDENSEIYRHYAQFCQCPAMEPFENDHEFEQNFAEVLRMNTIDVMDIEEEETEMESDFNEYTQIGSDLGIIPMQCKHFASDPCWLARWLVGDDKVPKVI.

Positions 1–29 are disordered; it reads MAKSENSTTSTFSSFANKIQPSNDAESDP. The SAC domain occupies 173–575; it reads LSSVDLTKDF…GDALAQQYGG (403 aa). The Phosphatase catalytic core motif lies at 511–522; that stretch reads RTNCIDCLDRTN. The required for subcellular localization stretch occupies residues 715–912; it reads RPGGNTGSTG…VGDDKVPKVI (198 aa). A disordered region spans residues 740 to 766; the sequence is LFGSRKPEESSSATKSGADDSEKGVTS.

As to quaternary structure, component of the PI(3,5)P2 regulatory complex at least composed of ATG18, SAC/FIG4, FAB1 and VAC14. Mg(2+) serves as cofactor. In terms of tissue distribution, ubiquitous with higher expression level in both young elongating and nonelongating stems. Detected in vascular tissues.

The protein localises to the vacuole membrane. It localises to the golgi apparatus. It catalyses the reaction a 1,2-diacyl-sn-glycero-3-phospho-(1D-myo-inositol-3-phosphate) + H2O = a 1,2-diacyl-sn-glycero-3-phospho-(1D-myo-inositol) + phosphate. The enzyme catalyses a 1,2-diacyl-sn-glycero-3-phospho-(1D-myo-inositol-3,5-bisphosphate) + H2O = a 1,2-diacyl-sn-glycero-3-phospho-(1D-myo-inositol-3-phosphate) + phosphate. The catalysed reaction is a 1,2-diacyl-sn-glycero-3-phospho-(1D-myo-inositol 4-phosphate) + H2O = a 1,2-diacyl-sn-glycero-3-phospho-(1D-myo-inositol) + phosphate. Phosphoinositide phosphatase which catalyzes the hydrolysis of phosphatidylinositol-3,5-bisphosphate (PtdIns(3,5)P2). Can also catalyze the hydrolysis of phosphatidylinositol 3-phosphate (PtdIns(3)P) and phosphatidylinositol 4-phosphate (PtdIns(4)P). Required for normal cell morphogenesis, cell wall synthesis, and actin organization. In Arabidopsis thaliana (Mouse-ear cress), this protein is Phosphatidylinositol-3-phosphatase SAC1 (SAC1).